A 549-amino-acid chain; its full sequence is Glucose-6-phosphate isomerase (549 aa).

The active-site Proton donor is E353. Residues H384 and K513 contribute to the active site.

It belongs to the GPI family.

It is found in the cytoplasm. The catalysed reaction is alpha-D-glucose 6-phosphate = beta-D-fructose 6-phosphate. It functions in the pathway carbohydrate biosynthesis; gluconeogenesis. The protein operates within carbohydrate degradation; glycolysis; D-glyceraldehyde 3-phosphate and glycerone phosphate from D-glucose: step 2/4. Catalyzes the reversible isomerization of glucose-6-phosphate to fructose-6-phosphate. This chain is Glucose-6-phosphate isomerase, found in Brucella canis (strain ATCC 23365 / NCTC 10854 / RM-666).